The sequence spans 215 residues: Small ribosomal subunit protein uS5 (215 aa).

Positions methionine 1–glycine 12 are enriched in gly residues. The disordered stretch occupies residues methionine 1–glutamine 31. The span at glycine 13–glutamine 31 shows a compositional bias: basic and acidic residues. Residues tyrosine 34–valine 97 form the S5 DRBM domain.

It belongs to the universal ribosomal protein uS5 family. Part of the 30S ribosomal subunit. Contacts proteins S4 and S8.

Its function is as follows. With S4 and S12 plays an important role in translational accuracy. Located at the back of the 30S subunit body where it stabilizes the conformation of the head with respect to the body. This is Small ribosomal subunit protein uS5 from Cutibacterium acnes (strain DSM 16379 / KPA171202) (Propionibacterium acnes).